Reading from the N-terminus, the 494-residue chain is MKYNDLRDFLTLLEQQGELKRITLPVDPHLEITEIADRTLRAGGPALLFENPKGYSMPVLCNLFGTPKRVAMGMGQEDVSALREVGKLLAFLKEPEPPKGFRDLFDKLPQFKQVLNMPTKRLRGAPCQQKIVSGDDVDLNRIPIMTCWPEDAAPLITWGLTVTRGPHKERQNLGIYRQQLIGKNKLIMRWLSHRGGALDYQEWCAAHPGERFPVSVALGADPATILGAVTPVPDTLSEYAFAGLLRGTKTEVVKCISNDLEVPASAEIVLEGYIDPGEMAPEGPYGDHTGYYNEVDSFPVFTVTHITQREDAIYHSTYTGRPPDEPAVLGVALNEVFVPILQKQFPEIVDFYLPPEGCSYRLAVVTIKKQYAGHAKRVMMGVWSFLRQFMYTKFVIVCDDDVNARDWNDVIWAITTRMDPARDTVLVENTPIDYLDFASPVSGLGSKMGLDATNKWPGETQREWGRPIKKDPDVVAHIDAIWDELAIFNNGKSA.

Asn172 serves as a coordination point for Mn(2+). Prenylated FMN contacts are provided by residues 175–177 (IYR), 189–191 (RWL), and 194–195 (RG). Glu238 is a Mn(2+) binding site. Residue Asp287 is the Proton donor of the active site.

The protein belongs to the UbiD family. As to quaternary structure, homohexamer. Requires prenylated FMN as cofactor. It depends on Mn(2+) as a cofactor.

It localises to the cell membrane. It catalyses the reaction a 4-hydroxy-3-(all-trans-polyprenyl)benzoate + H(+) = a 2-(all-trans-polyprenyl)phenol + CO2. The protein operates within cofactor biosynthesis; ubiquinone biosynthesis. Catalyzes the decarboxylation of 3-octaprenyl-4-hydroxy benzoate to 2-octaprenylphenol, an intermediate step in ubiquinone biosynthesis. The chain is 3-octaprenyl-4-hydroxybenzoate carboxy-lyase from Escherichia coli O9:H4 (strain HS).